The chain runs to 273 residues: 4-hydroxy-tetrahydrodipicolinate reductase (273 aa).

NAD(+) contacts are provided by residues 8-13 (GAAGRM), glutamate 34, 102-104 (GTT), and 128-131 (SSNM). Catalysis depends on histidine 160, which acts as the Proton donor/acceptor. Histidine 161 contributes to the (S)-2,3,4,5-tetrahydrodipicolinate binding site. Lysine 164 (proton donor) is an active-site residue. Residue 170–171 (GT) participates in (S)-2,3,4,5-tetrahydrodipicolinate binding.

Belongs to the DapB family.

The protein resides in the cytoplasm. The enzyme catalyses (S)-2,3,4,5-tetrahydrodipicolinate + NAD(+) + H2O = (2S,4S)-4-hydroxy-2,3,4,5-tetrahydrodipicolinate + NADH + H(+). It carries out the reaction (S)-2,3,4,5-tetrahydrodipicolinate + NADP(+) + H2O = (2S,4S)-4-hydroxy-2,3,4,5-tetrahydrodipicolinate + NADPH + H(+). Its pathway is amino-acid biosynthesis; L-lysine biosynthesis via DAP pathway; (S)-tetrahydrodipicolinate from L-aspartate: step 4/4. Its function is as follows. Catalyzes the conversion of 4-hydroxy-tetrahydrodipicolinate (HTPA) to tetrahydrodipicolinate. The sequence is that of 4-hydroxy-tetrahydrodipicolinate reductase from Methanobrevibacter smithii (strain ATCC 35061 / DSM 861 / OCM 144 / PS).